Consider the following 350-residue polypeptide: MEGPEVTDGDNVLNLTHLGLENLNLELVSENKRKDVQQILLPHNRLVVLPPLVASFIHLHLLDISNNNMVYIGEEILGLTKLKTLLAKNNRLDEFSFPKEMGGMRLEVLNLSGNRFEEIPDQFLQIPTLKSLSLGGNRLKSIPAEIENLISLEFLYLGGNFISSIPSELANLPYLSYLVLCDNRIQSIPPQLAQVHSLRSLSLHNNLLTYLPREILSLVHLHELSLRGNPLVVRFVRDLTYTPPTLLELAGRTIKSHGIPYCPWELPENLLRYLDLASKCPNPKCSGVYFDCCVRQIKFVDFCGKYRLPLMHYLCSPECSSPCGSTSHSESDSEDEVNVAARRMQKVLLG.

10 LRR repeats span residues 14-34 (NLTHLGLENLNLELVSENKRK), 35-56 (DVQQILLPHNRLVVLPPLVASF), 58-80 (HLHLLDISNNNMVYIGEEILGLT), 81-102 (KLKTLLAKNNRLDEFSFPKEMG), 105-125 (RLEVLNLSGNRFEEIPDQFLQ), 128-149 (TLKSLSLGGNRLKSIPAEIENL), 151-173 (SLEFLYLGGNFISSIPSELANLP), 174-195 (YLSYLVLCDNRIQSIPPQLAQV), 197-218 (SLRSLSLHNNLLTYLPREILSL), and 220-240 (HLHELSLRGNPLVVRFVRDLT).

The chain is Leucine-rich repeat-containing protein 58 (lrrc58) from Xenopus laevis (African clawed frog).